A 423-amino-acid polypeptide reads, in one-letter code: Cytochrome c biogenesis protein Ccs1 (423 aa).

Transmembrane regions (helical) follow at residues 11-31 (LKFA…GSII), 70-90 (NFWF…CTFF), and 153-173 (IAPV…IFAS).

This sequence belongs to the Ccs1/CcsB family. As to quaternary structure, may interact with CcsA.

It is found in the plastid. The protein localises to the chloroplast thylakoid membrane. Its function is as follows. Required during biogenesis of c-type cytochromes (cytochrome c6 and cytochrome f) at the step of heme attachment. In Heterosigma akashiwo (strain NIES-293 / 8280G21-1), this protein is Cytochrome c biogenesis protein Ccs1.